We begin with the raw amino-acid sequence, 133 residues long: Large ribosomal subunit protein uL14 (133 aa).

Belongs to the universal ribosomal protein uL14 family. Part of the 50S ribosomal subunit. Forms a cluster with proteins L3 and L24e, part of which may contact the 16S rRNA in 2 intersubunit bridges.

Its function is as follows. Binds to 23S rRNA. Forms part of two intersubunit bridges in the 70S ribosome. The protein is Large ribosomal subunit protein uL14 of Methanopyrus kandleri (strain AV19 / DSM 6324 / JCM 9639 / NBRC 100938).